The sequence spans 878 residues: Alanine--tRNA ligase (878 aa).

4 residues coordinate Zn(2+): H568, H572, C670, and H674.

Belongs to the class-II aminoacyl-tRNA synthetase family. The cofactor is Zn(2+).

Its subcellular location is the cytoplasm. The catalysed reaction is tRNA(Ala) + L-alanine + ATP = L-alanyl-tRNA(Ala) + AMP + diphosphate. Its function is as follows. Catalyzes the attachment of alanine to tRNA(Ala) in a two-step reaction: alanine is first activated by ATP to form Ala-AMP and then transferred to the acceptor end of tRNA(Ala). Also edits incorrectly charged Ser-tRNA(Ala) and Gly-tRNA(Ala) via its editing domain. The polypeptide is Alanine--tRNA ligase (Latilactobacillus sakei subsp. sakei (strain 23K) (Lactobacillus sakei subsp. sakei)).